The chain runs to 430 residues: tRNA pseudouridine synthase Pus10 (430 aa).

Aspartate 253 acts as the Nucleophile in catalysis. Substrate contacts are provided by tyrosine 320 and tyrosine 392.

This sequence belongs to the pseudouridine synthase Pus10 family.

It carries out the reaction uridine(54) in tRNA = pseudouridine(54) in tRNA. It catalyses the reaction uridine(55) in tRNA = pseudouridine(55) in tRNA. Functionally, responsible for synthesis of pseudouridine from uracil-54 and uracil-55 in the psi GC loop of transfer RNAs. The sequence is that of tRNA pseudouridine synthase Pus10 from Ignisphaera aggregans (strain DSM 17230 / JCM 13409 / AQ1.S1).